A 56-amino-acid polypeptide reads, in one-letter code: Large ribosomal subunit protein bL32 (56 aa).

The segment covering 1-20 (MAVPKRRTSRSNTRSRRSQW) has biased composition (basic residues). The interval 1-24 (MAVPKRRTSRSNTRSRRSQWKAKV) is disordered.

Belongs to the bacterial ribosomal protein bL32 family.

In Frankia casuarinae (strain DSM 45818 / CECT 9043 / HFP020203 / CcI3), this protein is Large ribosomal subunit protein bL32.